The sequence spans 470 residues: ATP synthase subunit beta (470 aa).

Residue 151–158 participates in ATP binding; it reads GGAGVGKT.

It belongs to the ATPase alpha/beta chains family. As to quaternary structure, F-type ATPases have 2 components, CF(1) - the catalytic core - and CF(0) - the membrane proton channel. CF(1) has five subunits: alpha(3), beta(3), gamma(1), delta(1), epsilon(1). CF(0) has three main subunits: a(1), b(2) and c(9-12). The alpha and beta chains form an alternating ring which encloses part of the gamma chain. CF(1) is attached to CF(0) by a central stalk formed by the gamma and epsilon chains, while a peripheral stalk is formed by the delta and b chains.

Its subcellular location is the cell membrane. The enzyme catalyses ATP + H2O + 4 H(+)(in) = ADP + phosphate + 5 H(+)(out). Functionally, produces ATP from ADP in the presence of a proton gradient across the membrane. The catalytic sites are hosted primarily by the beta subunits. This chain is ATP synthase subunit beta, found in Mycoplasma mobile (strain ATCC 43663 / 163K / NCTC 11711) (Mesomycoplasma mobile).